We begin with the raw amino-acid sequence, 538 residues long: Atos homolog protein B (538 aa).

Residues 1–18 (MRHVQAEPSPSSEPEAGP) are compositionally biased toward low complexity. Disordered stretches follow at residues 1-114 (MRHV…LGVA) and 133-300 (TSSW…VLDP). Positions 227 to 238 (HTPPGPGPPGPC) are enriched in pro residues. Phosphoserine is present on residues Ser254 and Ser255. Residues 348-430 (LLGNFEESLL…VPKVGTVQVT (83 aa)) are required for macropage invasion. Positions 436–444 (QTVVKMFLV) are transactivation domain 1 (TAD1).

It belongs to the ATOS family.

It localises to the nucleus. Its function is as follows. Transcription regulator that may syncronize transcriptional and translational programs. This Homo sapiens (Human) protein is Atos homolog protein B.